A 151-amino-acid polypeptide reads, in one-letter code: Protein SprT-like (151 aa).

One can recognise a SprT-like domain in the interval 6 to 148 (LQALVERISL…FCRGKLKKIK (143 aa)). Residue His67 coordinates Zn(2+). The active site involves Glu68. His71 serves as a coordination point for Zn(2+).

It belongs to the SprT family. Zn(2+) is required as a cofactor.

It is found in the cytoplasm. This chain is Protein SprT-like, found in Anoxybacillus flavithermus (strain DSM 21510 / WK1).